Here is a 374-residue protein sequence, read N- to C-terminus: Aminodeoxychorismate lyase (374 aa).

It belongs to the class-IV pyridoxal-phosphate-dependent aminotransferase family. Homodimer. Pyridoxal 5'-phosphate serves as cofactor.

Its subcellular location is the cytoplasm. It carries out the reaction 4-amino-4-deoxychorismate = 4-aminobenzoate + pyruvate + H(+). It participates in cofactor biosynthesis; tetrahydrofolate biosynthesis; 4-aminobenzoate from chorismate: step 2/2. Functionally, converts 4-amino-4-deoxychorismate into 4-aminobenzoate (PABA) and pyruvate. This chain is Aminodeoxychorismate lyase (ABZ2), found in Saccharomyces cerevisiae (strain ATCC 204508 / S288c) (Baker's yeast).